A 473-amino-acid chain; its full sequence is Aspartyl aminopeptidase 1 (473 aa).

Zn(2+) is bound at residue His-93. Substrate is bound at residue His-168. Zn(2+) contacts are provided by Asp-262, Glu-298, Glu-299, and Asp-343. Glu-298 contributes to the substrate binding site. Residues Asp-343, His-346, Lys-371, and Tyr-378 each contribute to the substrate site. A Zn(2+)-binding site is contributed by His-437.

The protein belongs to the peptidase M18 family. In terms of assembly, tetrahedron-shaped homododecamer built from six homodimers. Interacts with autophagy receptor Nbr1. Requires Zn(2+) as cofactor.

Its subcellular location is the cytoplasm. The protein resides in the vacuole lumen. It carries out the reaction Release of an N-terminal aspartate or glutamate from a peptide, with a preference for aspartate.. Aspartyl aminopeptidase that is able to remove aspartyl residue at N-terminus of angiotensin I. Also acts as a chaperone and efficiently suppressed the thermal aggregation of citrate synthase. This is Aspartyl aminopeptidase 1 (ape4) from Schizosaccharomyces pombe (strain 972 / ATCC 24843) (Fission yeast).